We begin with the raw amino-acid sequence, 125 residues long: Small ribosomal subunit protein bS6 (125 aa).

A disordered region spans residues 97–125 (TEASPMKAAKEERKPLAEVENNDFEDAEE). Over residues 104–113 (AAKEERKPLA) the composition is skewed to basic and acidic residues. Residues 116 to 125 (ENNDFEDAEE) show a composition bias toward acidic residues.

This sequence belongs to the bacterial ribosomal protein bS6 family.

Its function is as follows. Binds together with bS18 to 16S ribosomal RNA. The protein is Small ribosomal subunit protein bS6 of Haemophilus influenzae (strain PittEE).